A 94-amino-acid polypeptide reads, in one-letter code: Putative defensin-like protein 88 (94 aa).

A signal peptide spans 1 to 26; it reads MATQKFSYFLLVLLMVFALILPSIIS. Disulfide bonds link C32/C72, C38/C59, and C48/C71.

The protein belongs to the DEFL family.

The protein resides in the secreted. The protein is Putative defensin-like protein 88 of Arabidopsis thaliana (Mouse-ear cress).